The chain runs to 608 residues: MKWLKQLQSLHTKLVIVYVLLIIIGMQIIGLYFTNNLEKELLDNFKKNITQYAKQLEISIEKVYDEKGSVNAQKDIQNLLSEYANRQEIGEIRFIDKDQIIIATTKQSNRSLINQKANDSSVQKALSLGQSNDHLILKDYGGGKDRVWVYNIPVKVDKKVIGNIYIESKINDVYNQLNNINQIFIVGTAISLLITVILGFFIARTITKPITDMRNQTVEMSRGNYTQRVKIYGNDEIGELALAFNNLSKRVQEAQANTESEKRRLDSVITHMSDGIIATDRRGRIRIVNDMALKMLGMAKEDIIGYYMLSVLSLEDEFKLEEIQENNDSFLLDLNEEEGLIARVNFSTIVQETGFVTGYIAVLHDVTEQQQVERERREFVANVSHELRTPLTSMNSYIEALEEGAWKDEELAPQFLSVTREETERMIRLVNDLLQLSKMDNESDQINKEIIDFNMFINKIINRHEMSAKDTTFIRDIPKKTIFTEFDPDKMTQVFDNVITNAMKYSRGDKRVEFHVKQNPLYNRMTIRIKDNGIGIPINKVDKIFDRFYRVDKARTRKMGGTGLGLAISKEIVEAHNGRIWANSVEGQGTSIFITLPCEVIEDGDWDE.

The next 2 membrane-spanning stretches (helical) occupy residues 14 to 34 (LVIV…LYFT) and 183 to 203 (IFIV…FFIA). Positions 204 to 256 (RTITKPITDMRNQTVEMSRGNYTQRVKIYGNDEIGELALAFNNLSKRVQEAQA) constitute an HAMP domain. Residues 261 to 331 (EKRRLDSVIT…EIQENNDSFL (71 aa)) enclose the PAS domain. Zn(2+)-binding residues include His-271, Asp-274, His-364, and Glu-368. The PAC domain occupies 314–378 (LEDEFKLEEI…QQQVERERRE (65 aa)). Positions 382 to 600 (NVSHELRTPL…SIFITLPCEV (219 aa)) constitute a Histidine kinase domain. The residue at position 385 (His-385) is a Phosphohistidine; by autocatalysis.

In terms of assembly, forms homodimers. Forms homooligomers. In terms of processing, autophosphorylated.

The protein resides in the cell membrane. The catalysed reaction is ATP + protein L-histidine = ADP + protein N-phospho-L-histidine.. Its activity is regulated as follows. By zinc. Zinc-binding negatively regulates WalK kinase activity and thus autophosphorylation. Functionally, member of the two-component regulatory system WalK/WalR that regulates genes involved in cell wall metabolism, virulence regulation, biofilm production, oxidative stress resistance and antibiotic resistance via direct or indirect regulation of autolysins. Functions as a sensor protein kinase which is autophosphorylated at a histidine residue in the dimerization domain and transfers its phosphate group to the conserved aspartic acid residue in the regulatory domain of WalR. In turn, WalR binds to the upstream promoter regions of the target genes to positively and negatively regulate their expression. This Staphylococcus aureus (strain Mu3 / ATCC 700698) protein is Sensor protein kinase WalK (walK).